Consider the following 159-residue polypeptide: Protein HydD (159 aa).

It belongs to the peptidase A31 family.

The polypeptide is Protein HydD (hydD) (Wolinella succinogenes (strain ATCC 29543 / DSM 1740 / CCUG 13145 / JCM 31913 / LMG 7466 / NCTC 11488 / FDC 602W) (Vibrio succinogenes)).